The following is a 465-amino-acid chain: Argininosuccinate lyase (465 aa).

This sequence belongs to the lyase 1 family. Argininosuccinate lyase subfamily.

It is found in the cytoplasm. The enzyme catalyses 2-(N(omega)-L-arginino)succinate = fumarate + L-arginine. The protein operates within amino-acid biosynthesis; L-arginine biosynthesis; L-arginine from L-ornithine and carbamoyl phosphate: step 3/3. This is Argininosuccinate lyase from Desulfatibacillum aliphaticivorans.